Reading from the N-terminus, the 459-residue chain is tRNA modification GTPase MnmE (459 aa).

Residues arginine 22, glutamate 85, and arginine 124 each coordinate (6S)-5-formyl-5,6,7,8-tetrahydrofolate. The TrmE-type G domain maps to 221 to 380 (GLSTVIVGKP…LEIQIRDLFF (160 aa)). Residue asparagine 231 participates in K(+) binding. GTP contacts are provided by residues 231-236 (NVGKSS), 250-256 (TEVAGTT), and 275-278 (DTAG). Mg(2+) is bound at residue serine 235. Residues threonine 250, valine 252, and threonine 255 each contribute to the K(+) site. A Mg(2+)-binding site is contributed by threonine 256. Residue lysine 459 participates in (6S)-5-formyl-5,6,7,8-tetrahydrofolate binding.

The protein belongs to the TRAFAC class TrmE-Era-EngA-EngB-Septin-like GTPase superfamily. TrmE GTPase family. As to quaternary structure, homodimer. Heterotetramer of two MnmE and two MnmG subunits. K(+) is required as a cofactor.

It localises to the cytoplasm. Exhibits a very high intrinsic GTPase hydrolysis rate. Involved in the addition of a carboxymethylaminomethyl (cmnm) group at the wobble position (U34) of certain tRNAs, forming tRNA-cmnm(5)s(2)U34. In Staphylococcus aureus (strain bovine RF122 / ET3-1), this protein is tRNA modification GTPase MnmE.